Reading from the N-terminus, the 393-residue chain is NAD(P)H-quinone oxidoreductase subunit H, chloroplastic (393 aa).

It belongs to the complex I 49 kDa subunit family. As to quaternary structure, NDH is composed of at least 16 different subunits, 5 of which are encoded in the nucleus.

It is found in the plastid. The protein resides in the chloroplast thylakoid membrane. It carries out the reaction a plastoquinone + NADH + (n+1) H(+)(in) = a plastoquinol + NAD(+) + n H(+)(out). The enzyme catalyses a plastoquinone + NADPH + (n+1) H(+)(in) = a plastoquinol + NADP(+) + n H(+)(out). In terms of biological role, NDH shuttles electrons from NAD(P)H:plastoquinone, via FMN and iron-sulfur (Fe-S) centers, to quinones in the photosynthetic chain and possibly in a chloroplast respiratory chain. The immediate electron acceptor for the enzyme in this species is believed to be plastoquinone. Couples the redox reaction to proton translocation, and thus conserves the redox energy in a proton gradient. The sequence is that of NAD(P)H-quinone oxidoreductase subunit H, chloroplastic from Solanum lycopersicum (Tomato).